We begin with the raw amino-acid sequence, 350 residues long: Uroporphyrinogen decarboxylase (350 aa).

Residues 27–31, F46, D76, Y152, S207, and H321 contribute to the substrate site; that span reads RQAGR.

This sequence belongs to the uroporphyrinogen decarboxylase family. Homodimer.

The protein localises to the cytoplasm. It carries out the reaction uroporphyrinogen III + 4 H(+) = coproporphyrinogen III + 4 CO2. Its pathway is porphyrin-containing compound metabolism; protoporphyrin-IX biosynthesis; coproporphyrinogen-III from 5-aminolevulinate: step 4/4. In terms of biological role, catalyzes the decarboxylation of four acetate groups of uroporphyrinogen-III to yield coproporphyrinogen-III. The protein is Uroporphyrinogen decarboxylase of Listeria innocua serovar 6a (strain ATCC BAA-680 / CLIP 11262).